The chain runs to 450 residues: Probable glycosidase CRR1 (450 aa).

An N-terminal signal peptide occupies residues 1–17; sequence MSKRIIQLILLSAFARA. The region spanning 67–347 is the GH16 domain; it reads SPESCVPVPA…WENAPDIKAH (281 aa). Glu-225 serves as the catalytic Nucleophile. The Proton donor role is filled by Glu-229. The tract at residues 428 to 450 is disordered; it reads AQRQQHHRRSLPHVEAPPITNTM.

Belongs to the glycosyl hydrolase 16 family. CRR1 subfamily.

It localises to the spore wall. Its function is as follows. Spore specific glycosidase involved in spore wall assembly during sporulation. May be involved in copper import. In Eremothecium gossypii (strain ATCC 10895 / CBS 109.51 / FGSC 9923 / NRRL Y-1056) (Yeast), this protein is Probable glycosidase CRR1 (CRR1).